Consider the following 230-residue polypeptide: Small ribosomal subunit protein uS3 (230 aa).

Residues 39–107 enclose the KH type-2 domain; sequence VRKFLEKKLE…PAQINIAEIR (69 aa).

The protein belongs to the universal ribosomal protein uS3 family. Part of the 30S ribosomal subunit. Forms a tight complex with proteins S10 and S14.

In terms of biological role, binds the lower part of the 30S subunit head. Binds mRNA in the 70S ribosome, positioning it for translation. This Shewanella amazonensis (strain ATCC BAA-1098 / SB2B) protein is Small ribosomal subunit protein uS3.